We begin with the raw amino-acid sequence, 29 residues long: Protamine-like protein (29 aa).

The segment at 1-29 (MRSFDQGSTRAPARERCRRQRPEGRSAQR) is disordered. The segment covering 12-29 (PARERCRRQRPEGRSAQR) has biased composition (basic and acidic residues).

The polypeptide is Protamine-like protein (tpr) (Escherichia coli (strain K12)).